The primary structure comprises 1050 residues: Collagen alpha-2(I) chain (1050 aa).

Residues 1–1050 (SGGFDFSFLP…FGYEGDFYRA (1050 aa)) form a disordered region. 4-hydroxyproline occurs at positions 10 and 13. A compositionally biased stretch (gly residues) spans 20–32 (RYYGVGLGPGPMG). 2 stretches are compositionally biased toward low complexity: residues 33 to 46 (LMGP…SGAP) and 56 to 77 (EPGE…APGK). A 4-hydroxyproline mark is found at proline 40 and proline 46. Basic and acidic residues predominate over residues 78-92 (AGEDGHPGKPGRPGE). The residue at position 114 (lysine 114) is a 5-hydroxylysine; alternate. Lysine 114 carries an O-linked (Gal...) hydroxylysine; alternate glycan. Composition is skewed to low complexity over residues 161–190 (VGAP…SAGP), 236–257 (PGAN…AGAP), 298–311 (EPGS…PGSS), 320–338 (NGES…RGNP), and 355–371 (PAGA…RGPS). A 4-hydroxyproline mark is found at proline 377 and proline 380. Low complexity-rich tracts occupy residues 406-425 (LPGI…RGEA) and 452-467 (AGNR…NGAQ). Positions 474 to 483 (GVQGGKGEQG) are enriched in gly residues. 3 stretches are compositionally biased toward low complexity: residues 530–547 (PGES…SRGP), 598–642 (VGTT…PRGS), and 649–669 (VGPA…QPGA). Residues 670-679 (KGERGTKGPK) show a composition bias toward basic and acidic residues. Low complexity predominate over residues 687–697 (PTGPVGSAGPA). The span at 707–716 (GSRGDGGPPG) shows a compositional bias: gly residues. Residues 718–727 (TGFPGAAGRT) show a composition bias toward low complexity. Residues 764–773 (GETGAGGPPG) show a composition bias toward gly residues. Low complexity-rich tracts occupy residues 781 to 808 (SGEP…LGLP), 816 to 841 (LPGV…RGPS), 881 to 903 (YAGN…VGPA), and 911 to 926 (EPGP…ALGP). Basic and acidic residues predominate over residues 936-947 (RGDKGEPGDKGP). Residues 1020–1032 (SGPPGPPGPPGPP) are compositionally biased toward pro residues.

Belongs to the fibrillar collagen family. As to quaternary structure, trimers of one alpha 2(I) and two alpha 1(I) chains. Interacts (via C-terminus) with TMEM131 (via PapD-L domain); the interaction is direct and is involved in assembly and TRAPPIII ER-to-Golgi transport complex-dependent secretion of collagen. In terms of processing, prolines at the third position of the tripeptide repeating unit (G-X-Y) are hydroxylated in some or all of the chains. As to expression, expressed in bones.

The protein localises to the secreted. It localises to the extracellular space. It is found in the extracellular matrix. Type I collagen is a member of group I collagen (fibrillar forming collagen). This chain is Collagen alpha-2(I) chain, found in Megatherium americanum (Giant ground sloth).